The following is a 147-amino-acid chain: uncharacterized protein (147 aa).

The Response regulatory domain occupies 1-59 (MGAELVKWVKSHKIDAHIITFVAKMPYIDSIKLLEAGAKGCVWKTSHPAKLNRAIDSIS). Residues 78 to 143 (RYSSDNQLTN…ELIKTALRMG (66 aa)) form the HTH luxR-type domain. Positions 102-121 (NKEIANFLQLSRKTVETHRL) form a DNA-binding region, H-T-H motif.

Overexpressed protein is phosphorylated in vitro by non-cognate histidine kinases BarA and UhpB.

This is an uncharacterized protein from Escherichia coli (strain K12).